Consider the following 513-residue polypeptide: L-threonine dehydratase biosynthetic IlvA (513 aa).

Residue lysine 63 is modified to N6-(pyridoxal phosphate)lysine. Pyridoxal 5'-phosphate contacts are provided by residues asparagine 90, 189–193 (GGGGL), and serine 316. 2 ACT-like domains span residues 340-411 (ALLA…DMSD) and 433-504 (RLYT…DVTK).

It belongs to the serine/threonine dehydratase family. Homotetramer. Requires pyridoxal 5'-phosphate as cofactor.

The catalysed reaction is L-threonine = 2-oxobutanoate + NH4(+). It functions in the pathway amino-acid biosynthesis; L-isoleucine biosynthesis; 2-oxobutanoate from L-threonine: step 1/1. Its function is as follows. Catalyzes the anaerobic formation of alpha-ketobutyrate and ammonia from threonine in a two-step reaction. The first step involved a dehydration of threonine and a production of enamine intermediates (aminocrotonate), which tautomerizes to its imine form (iminobutyrate). Both intermediates are unstable and short-lived. The second step is the nonenzymatic hydrolysis of the enamine/imine intermediates to form 2-ketobutyrate and free ammonia. In the low water environment of the cell, the second step is accelerated by RidA. This chain is L-threonine dehydratase biosynthetic IlvA (ilvA), found in Haemophilus influenzae (strain ATCC 51907 / DSM 11121 / KW20 / Rd).